We begin with the raw amino-acid sequence, 339 residues long: DNA-directed RNA polymerase subunit alpha (339 aa).

Residues Met1 to Glu233 form an alpha N-terminal domain (alpha-NTD) region. The segment at Lys264–Phe339 is alpha C-terminal domain (alpha-CTD).

The protein belongs to the RNA polymerase alpha chain family. In terms of assembly, in plastids the minimal PEP RNA polymerase catalytic core is composed of four subunits: alpha, beta, beta', and beta''. When a (nuclear-encoded) sigma factor is associated with the core the holoenzyme is formed, which can initiate transcription.

The protein resides in the plastid. It localises to the chloroplast. The catalysed reaction is RNA(n) + a ribonucleoside 5'-triphosphate = RNA(n+1) + diphosphate. Functionally, DNA-dependent RNA polymerase catalyzes the transcription of DNA into RNA using the four ribonucleoside triphosphates as substrates. This Agropyron cristatum (Crested wheatgrass) protein is DNA-directed RNA polymerase subunit alpha.